The sequence spans 126 residues: Large ribosomal subunit protein uL22 (126 aa).

This sequence belongs to the universal ribosomal protein uL22 family. In terms of assembly, part of the 50S ribosomal subunit.

Its function is as follows. This protein binds specifically to 23S rRNA; its binding is stimulated by other ribosomal proteins, e.g. L4, L17, and L20. It is important during the early stages of 50S assembly. It makes multiple contacts with different domains of the 23S rRNA in the assembled 50S subunit and ribosome. The globular domain of the protein is located near the polypeptide exit tunnel on the outside of the subunit, while an extended beta-hairpin is found that lines the wall of the exit tunnel in the center of the 70S ribosome. The chain is Large ribosomal subunit protein uL22 from Caulobacter vibrioides (strain ATCC 19089 / CIP 103742 / CB 15) (Caulobacter crescentus).